Here is a 5405-residue protein sequence, read N- to C-terminus: IgGFc-binding protein (5405 aa).

Positions 1-23 (MGALWSWWILWAGATLLWGLTQE) are cleaved as a signal peptide. The interval 24–450 (ASVDLKNTGR…EPSCEGMQCA (427 aa)) is igGFc-binding. Residues Asn-75 and Asn-91 are each glycosylated (N-linked (GlcNAc...) asparagine). The VWFD 1 domain maps to 470-650 (AVCRAQGDPH…KLDDGDYLCE (181 aa)). 2 disulfides stabilise this stretch: Cys-472–Cys-611 and Cys-494–Cys-649. In terms of domain architecture, TIL 1 spans 745–799 (CPANSRYELCGPACPTSCNGAAAPSNCSGRPCVEGCVCLPGFVASGGACVPASSC). Residues 862 to 1041 (GTCQGSGDPH…WQEETRPGCG (180 aa)) enclose the VWFD 2 domain. 2 disulfides stabilise this stretch: Cys-864/Cys-1003 and Cys-886/Cys-1040. The TIL 2 domain maps to 1136 to 1189 (CPPHSHYEACSYGCPLSCGDLPVPGGCGSECHEGCVCDEGFALSGESCLPLASC). The VWFD 3 domain occupies 1250 to 1429 (STCQASGDPH…EEVVPDSPCL (180 aa)). 2 disulfides stabilise this stretch: Cys-1252–Cys-1390 and Cys-1274–Cys-1428. The N-linked (GlcNAc...) (complex) asparagine glycan is linked to Asn-1317. The TIL 3 domain occupies 1532-1585 (CPPNSHYELCADTCSLGCSALSAPPQCQDGCAEGCQCDSGFLYNGQACVPIQQC). The VWFD 4 domain maps to 1671–1854 (ATCWLWGDPH…RAPGWDPLCW (184 aa)). 3 disulfide bridges follow: Cys-1673-Cys-1815, Cys-1695-Cys-1853, and Cys-1704-Cys-1812. An N-linked (GlcNAc...) asparagine glycan is attached at Asn-1743. Residues 1950 to 2007 (CPENSHYEVCGSPCPASCPSPAPLTTPAVCEGPCVEGCQCDAGFVLSADRCVPLNNGC) enclose the TIL 4 domain. Positions 2070–2253 (AECQAWGDPH…VSKPCPSPCT (184 aa)) constitute a VWFD 5 domain. Cystine bridges form between Cys-2072–Cys-2211 and Cys-2094–Cys-2252. An N-linked (GlcNAc...) asparagine glycan is attached at Asn-2138. The region spanning 2337-2390 (CPAHSHYELCGDSCPGSCPSLSAPEGCESACREGCVCDAGFVLSGDTCVPVGQC) is the TIL 5 domain. One can recognise a VWFD 6 domain in the interval 2451 to 2630 (TTCQASGDPH…EEVVPDSPCL (180 aa)). Intrachain disulfides connect Cys-2453/Cys-2591 and Cys-2475/Cys-2629. A glycan (N-linked (GlcNAc...) asparagine) is linked at Asn-2518. The TIL 6 domain occupies 2733 to 2786 (CPQNSHYELCADTCSLGCSALSAPLQCPDGCAEGCQCDSGFLYNGQACVPIQQC). The region spanning 2872-3055 (ATCWLWGDPH…RAPGWDPLCW (184 aa)) is the VWFD 7 domain. 3 disulfide bridges follow: Cys-2874/Cys-3016, Cys-2896/Cys-3054, and Cys-2905/Cys-3013. A TIL 7 domain is found at 3151-3208 (CPENSHYEVCGPPCPASCPSPAPLTTPAVCEGPCVEGCQCDAGFVLSADRCVPLNNGC). Residues 3271–3454 (AECQAWGDPH…VSKPCPSPCT (184 aa)) form the VWFD 8 domain. 2 cysteine pairs are disulfide-bonded: Cys-3273-Cys-3412 and Cys-3295-Cys-3453. The TIL 8 domain occupies 3538–3591 (CPAHSHYELCGDSCPGSCPSLSAPEGCESACREGCVCDAGFVLSGDTCVPVGQC). The region spanning 3652 to 3831 (TTCQASGDPH…EEVVPDSPCL (180 aa)) is the VWFD 9 domain. 2 disulfides stabilise this stretch: Cys-3654–Cys-3792 and Cys-3676–Cys-3830. An N-linked (GlcNAc...) asparagine glycan is attached at Asn-3719. In terms of domain architecture, TIL 9 spans 3934 to 3987 (CPQNSHYELCADTCSLGCSALSAPLQCPDGCAEGCQCDSGFLYNGQACVPIQQC). The 184-residue stretch at 4073 to 4256 (ATCWLWGDPH…RAPGWDPLCW (184 aa)) folds into the VWFD 10 domain. 3 disulfide bridges follow: Cys-4075/Cys-4217, Cys-4097/Cys-4255, and Cys-4106/Cys-4214. N-linked (GlcNAc...) asparagine glycosylation occurs at Asn-4145. The TIL 10 domain occupies 4352 to 4409 (CPENSHYEVCGPPCPASCPSPAPLTTPAVCEGPCVEGCQCDAGFVLSADRCVPLNNGC). Residues 4472-4655 (AECQAWGDPH…VSKPCPSPCT (184 aa)) form the VWFD 11 domain. Disulfide bonds link Cys-4474–Cys-4613 and Cys-4496–Cys-4654. Asn-4540 carries an N-linked (GlcNAc...) asparagine glycan. Residues 4739-4792 (CPAHSHYELCGDSCPVSCPSLSAPEGCESACREGCVCDAGFVLSGDTCVPVGQC) enclose the TIL 11 domain. Positions 4854-5025 (GRCLANGGIH…RAPGSSKGCG (172 aa)) constitute a VWFD 12 domain. 2 disulfides stabilise this stretch: Cys-4856–Cys-4986 and Cys-4878–Cys-5024. A TIL 12 domain is found at 5121-5174 (CPAHSHYSICTRTCQGSCAALSGLTGCTTRCFEGCECDDRFLLSQGVCIPVQDC). The VWFD 13 domain maps to 5233 to 5404 (GLCVLSVGAN…WRAQDFSPCY (172 aa)). The cysteines at positions 5235 and 5372 are disulfide-linked.

As to quaternary structure, interacts with the Fc portion of IgG and with MUC2. In terms of tissue distribution, mainly expressed in placenta and colon epithelium. Expressed in thyroid, and down-regulated in thyroid carcinomas. Present in serum, with higher levels in patients with various autoimmune diseases (at protein level).

It is found in the secreted. Functionally, may be involved in the maintenance of the mucosal structure as a gel-like component of the mucosa. In Homo sapiens (Human), this protein is IgGFc-binding protein (FCGBP).